The primary structure comprises 506 residues: Maturase K (506 aa).

It belongs to the intron maturase 2 family. MatK subfamily.

The protein localises to the plastid. It localises to the chloroplast. In terms of biological role, usually encoded in the trnK tRNA gene intron. Probably assists in splicing its own and other chloroplast group II introns. In Trifolium subterraneum (Subterranean clover), this protein is Maturase K.